Consider the following 494-residue polypeptide: Chromosomal replication initiator protein DnaA (494 aa).

The interval 1–103 (MTTDPDPPFV…PVSDESDSGS (103 aa)) is domain I, interacts with DnaA modulators. The disordered stretch occupies residues 94–117 (PVSDESDSGSVASPAPVAAADPDD). Residues 101–113 (SGSVASPAPVAAA) are compositionally biased toward low complexity. The segment at 104–153 (VASPAPVAAADPDDDVVDDDLAARASAEESWPSYFTNRANRAAEDDATSV) is domain II. The domain III, AAA+ region stretch occupies residues 154–370 (NLNRRYTFDT…GALIRVTAFA (217 aa)). Residues Gly198, Gly200, Lys201, and Thr202 each coordinate ATP. A domain IV, binds dsDNA region spans residues 371–494 (SLNKTPIDKS…TTRIRQRAKR (124 aa)).

It belongs to the DnaA family. As to quaternary structure, oligomerizes as a right-handed, spiral filament on DNA at oriC.

The protein resides in the cytoplasm. Plays an essential role in the initiation and regulation of chromosomal replication. ATP-DnaA binds to the origin of replication (oriC) to initiate formation of the DNA replication initiation complex once per cell cycle. Binds the DnaA box (a 9 base pair repeat at the origin) and separates the double-stranded (ds)DNA. Forms a right-handed helical filament on oriC DNA; dsDNA binds to the exterior of the filament while single-stranded (ss)DNA is stabiized in the filament's interior. The ATP-DnaA-oriC complex binds and stabilizes one strand of the AT-rich DNA unwinding element (DUE), permitting loading of DNA polymerase. After initiation quickly degrades to an ADP-DnaA complex that is not apt for DNA replication. Binds acidic phospholipids. This Mycolicibacterium vanbaalenii (strain DSM 7251 / JCM 13017 / BCRC 16820 / KCTC 9966 / NRRL B-24157 / PYR-1) (Mycobacterium vanbaalenii) protein is Chromosomal replication initiator protein DnaA.